We begin with the raw amino-acid sequence, 244 residues long: Transcriptional regulatory protein AruR (244 aa).

The region spanning 6-124 (RVLVVDDDPV…ELVSRAKNLI (119 aa)) is the Response regulatory domain. At Asp60 the chain carries 4-aspartylphosphate. A DNA-binding region (ompR/PhoB-type) is located at residues 139–239 (QALRQFGDWL…IHGAGYLFTA (101 aa)).

Phosphorylated by AruS.

The protein localises to the cytoplasm. It functions in the pathway amino-acid degradation; L-arginine degradation [regulation]. Its function is as follows. Member of the two-component regulatory system AruS/AruR, which is involved in the regulation of the arginine transaminase (ATA) pathway in response to exogeneous L-arginine. Regulates transcription of aruH and aruI. This Pseudomonas aeruginosa (strain ATCC 15692 / DSM 22644 / CIP 104116 / JCM 14847 / LMG 12228 / 1C / PRS 101 / PAO1) protein is Transcriptional regulatory protein AruR (aruR).